A 403-amino-acid chain; its full sequence is MSHKIMAINAGSSSLKFQLLDMPQGKLLCQGLIERIGMANAGITLKAQEQKWQQTAPVADHREAVTLLLDMLTGHGIIRSIAEIEGVGHRVAHGGETFKDSARVTDETLAEIERLAELAPLHNPVNLLGINVFRQLLPDVPAVAVFDTAFHQTLNEAAYIYPLPWRYYEEFGIRRYGFHGTSHKYVSATLAEKLGVPLSALRVVSCHLGNGSSLCAIKGGKSVNTSMGFTPQSGVMMGTRSGDIDPSILPWLAQREGKTPQQLNQLLNNESGLLGVSGVSHDYRDVEQAADAGNPRAALALTLFAERIRATIGSYIMQMGGLDALVFTGGIGENSARARAAICQNLQFLGLSVDEAKNQRNATFIQADHALVKVAVINTNEELMIARDVMRIALAETPVAASA.

It belongs to the acetokinase family. PduW subfamily.

Its subcellular location is the cytoplasm. The catalysed reaction is propanoate + ATP = propanoyl phosphate + ADP. It functions in the pathway polyol metabolism; 1,2-propanediol degradation. Works with phosphate acetyltransferase (pta) to capture exogenous propionate and regenerate propionyl-CoA during degradation of 1,2-propanediol (1,2-PD). The polypeptide is Propionate kinase (Citrobacter rodentium (strain ICC168) (Citrobacter freundii biotype 4280)).